We begin with the raw amino-acid sequence, 165 residues long: Small ribosomal subunit protein uS3m (165 aa).

A mitochondrion-targeting transit peptide spans 1-30 (MNFLKKLLPQVATEVQQLSRSGFHTSSVCC).

The protein belongs to the universal ribosomal protein uS3 family. In terms of assembly, component of the mitochondrial ribosome small subunit (28S) which comprises a 12S rRNA and about 30 distinct proteins.

Its subcellular location is the mitochondrion. The protein is Small ribosomal subunit protein uS3m (mRpS24) of Drosophila melanogaster (Fruit fly).